Reading from the N-terminus, the 279-residue chain is Undecaprenyl-diphosphatase (279 aa).

8 helical membrane-spanning segments follow: residues 17–37 (TEFL…FFPF), 46–66 (AFED…VVVL), 92–112 (FQFY…GFLL), 123–143 (SDLL…MVFV), 156–176 (IGFK…IPGV), 197–217 (AEFS…YKLY), 226–246 (ETIG…YFII), and 257–277 (SFIS…LYFV).

This sequence belongs to the UppP family.

The protein localises to the cell inner membrane. It carries out the reaction di-trans,octa-cis-undecaprenyl diphosphate + H2O = di-trans,octa-cis-undecaprenyl phosphate + phosphate + H(+). In terms of biological role, catalyzes the dephosphorylation of undecaprenyl diphosphate (UPP). Confers resistance to bacitracin. This Leptospira biflexa serovar Patoc (strain Patoc 1 / ATCC 23582 / Paris) protein is Undecaprenyl-diphosphatase.